Consider the following 307-residue polypeptide: Ribonuclease Z (307 aa).

Positions 63, 65, 67, 68, 141, 208, and 266 each coordinate Zn(2+). The active-site Proton acceptor is the D67.

The protein belongs to the RNase Z family. Homodimer. Zn(2+) serves as cofactor.

The enzyme catalyses Endonucleolytic cleavage of RNA, removing extra 3' nucleotides from tRNA precursor, generating 3' termini of tRNAs. A 3'-hydroxy group is left at the tRNA terminus and a 5'-phosphoryl group is left at the trailer molecule.. Its function is as follows. Zinc phosphodiesterase, which displays some tRNA 3'-processing endonuclease activity. Probably involved in tRNA maturation, by removing a 3'-trailer from precursor tRNA. This is Ribonuclease Z from Chlamydia pneumoniae (Chlamydophila pneumoniae).